We begin with the raw amino-acid sequence, 786 residues long: Aculeacin-A acylase (786 aa).

The first 22 residues, 1 to 22 (MTSSYMRLKAAAIAFGVIVATA), serve as a signal peptide directing secretion. The propeptide occupies 23 to 34 (AVPSPASGREHD). The tract at residues 35–130 (GGYAALIRRA…PRDGVRAPCD (96 aa)) is substrate-binding. The propeptide at 215–229 (AAIAAALDGTSAGIG) is spacer peptide. Residues 220-239 (ALDGTSAGIGSNAYGLGAQA) form a possible recognition-sequence of an AAC processing enzyme region. The active-site Nucleophile is the S230. The disordered stretch occupies residues 658-689 (ACNGSPASPSTRSVGDIHTDSRGERRIPIHGG). Over residues 672–684 (GDIHTDSRGERRI) the composition is skewed to basic and acidic residues.

This sequence belongs to the peptidase S45 family. In terms of assembly, heterodimer of a small subunit and a large subunit processed from the same precursor.

It localises to the secreted. Functionally, catalyzes the hydrolysis of the palmitoyl moiety of the antifungal antibiotic, aculeacin-A, giving a hexapeptide moiety and a long chain fatty acid. The polypeptide is Aculeacin-A acylase (aac) (Actinoplanes utahensis).